The primary structure comprises 313 residues: Aspartate carbamoyltransferase catalytic subunit (313 aa).

2 residues coordinate carbamoyl phosphate: arginine 58 and threonine 59. Lysine 86 lines the L-aspartate pocket. The carbamoyl phosphate site is built by arginine 108, histidine 136, and glutamine 139. Arginine 169 and arginine 223 together coordinate L-aspartate. Residues glycine 265 and proline 266 each coordinate carbamoyl phosphate.

The protein belongs to the aspartate/ornithine carbamoyltransferase superfamily. ATCase family. In terms of assembly, heterododecamer (2C3:3R2) of six catalytic PyrB chains organized as two trimers (C3), and six regulatory PyrI chains organized as three dimers (R2).

The catalysed reaction is carbamoyl phosphate + L-aspartate = N-carbamoyl-L-aspartate + phosphate + H(+). The protein operates within pyrimidine metabolism; UMP biosynthesis via de novo pathway; (S)-dihydroorotate from bicarbonate: step 2/3. Functionally, catalyzes the condensation of carbamoyl phosphate and aspartate to form carbamoyl aspartate and inorganic phosphate, the committed step in the de novo pyrimidine nucleotide biosynthesis pathway. In Anaeromyxobacter sp. (strain K), this protein is Aspartate carbamoyltransferase catalytic subunit.